Here is a 383-residue protein sequence, read N- to C-terminus: MTIPIKESDPITVDVALGERSYDIVIGRGVLPSLGERIAALRPGARVAVVTDARVATHWLQRTEASLTGAGLTTSRIVVDEGEVSKSYAGVEFVCEELIKARIERNDLVVALGGGVVGDLAGFAAAIVRRGVDFVQVPTSLLAQVDSSVGGKTGINSPQGKNLVGAFHQPILVVADTAVLDTLSPRQFRAGYAEVAKYGLIGDEAFFAWLEVHHADIVKGDAAREHAVATSCRAKAAIVARDERESGERALLNLGHTFGHALEAATGFCGRLYHGEGVSIGMVLAAELSAQLGMIAAADVSRIERHLAAAGLPTRLQDIAGFRQEGLADADALMTLMAQDKKVRRGRLTFILLKAIGQAVVSSDVEPSMVRDFLARKLADAPA.

NAD(+) is bound by residues 81 to 86 (EGEVSK), 115 to 119 (GVVGD), 139 to 140 (TS), K152, and K161. Zn(2+) is bound by residues E194, H256, and H274.

This sequence belongs to the sugar phosphate cyclases superfamily. Dehydroquinate synthase family. Requires Co(2+) as cofactor. Zn(2+) is required as a cofactor. It depends on NAD(+) as a cofactor.

It is found in the cytoplasm. The enzyme catalyses 7-phospho-2-dehydro-3-deoxy-D-arabino-heptonate = 3-dehydroquinate + phosphate. It participates in metabolic intermediate biosynthesis; chorismate biosynthesis; chorismate from D-erythrose 4-phosphate and phosphoenolpyruvate: step 2/7. Catalyzes the conversion of 3-deoxy-D-arabino-heptulosonate 7-phosphate (DAHP) to dehydroquinate (DHQ). The protein is 3-dehydroquinate synthase of Nitrobacter winogradskyi (strain ATCC 25391 / DSM 10237 / CIP 104748 / NCIMB 11846 / Nb-255).